The primary structure comprises 1848 residues: Chitin synthase E (1848 aa).

The segment covering 1–17 has biased composition (low complexity); that stretch reads MAAPSPAGGAPSHAQSS. The tract at residues 1-22 is disordered; sequence MAAPSPAGGAPSHAQSSLPSLP. Residues 1–779 enclose the Myosin motor domain; the sequence is MAAPSPAGGA…CWADLAKVGE (779 aa). Residue 102–109 coordinates ATP; it reads GESGSGKT. The disordered stretch occupies residues 593 to 621; the sequence is SSKPLRMPSMARRKTSPSSRLAFDAGDAD. The actin-binding stretch occupies residues 659-683; that stretch reads LDIVNKCLSSTNLNPYFIFCLKPND. 2 consecutive transmembrane segments (helical) span residues 889 to 909 and 928 to 948; these read WIAL…KLFG and LIIW…PGLV. The Cytochrome b5 heme-binding domain occupies 952-1040; it reads QHVYSAAELS…LLDYRPTNIS (89 aa). Residues Asn-1038 and Asn-1063 are each glycosylated (N-linked (GlcNAc...) asparagine). Residues 1200 to 1220 traverse the membrane as a helical segment; the sequence is FILAISVLICSIIVFKFLAAL. Residues Asn-1423, Asn-1457, and Asn-1563 are each glycosylated (N-linked (GlcNAc...) asparagine). A run of 3 helical transmembrane segments spans residues 1595–1615, 1621–1641, and 1648–1668; these read LSTV…YWLV, IPYT…LIFI, and MVGW…ALPL. N-linked (GlcNAc...) asparagine glycosylation occurs at Asn-1786. Residues 1790 to 1845 form the DEK-C domain; the sequence is LPSDDAILAEIREILRTADLMSVTKKSIKLELERRFGVNLDLKRPYINSATEAVLA.

This sequence in the N-terminal section; belongs to the TRAFAC class myosin-kinesin ATPase superfamily. Myosin family. The protein in the C-terminal section; belongs to the chitin synthase family. Class V subfamily.

The protein resides in the cell membrane. It localises to the cell septum. It is found in the cell tip. It catalyses the reaction [(1-&gt;4)-N-acetyl-beta-D-glucosaminyl](n) + UDP-N-acetyl-alpha-D-glucosamine = [(1-&gt;4)-N-acetyl-beta-D-glucosaminyl](n+1) + UDP + H(+). Functionally, polymerizes chitin, a structural polymer of the cell wall and septum, by transferring the sugar moiety of UDP-GlcNAc to the non-reducing end of the growing chitin polymer. Important for hyphal growth and conidiophore development but not pathogenicity. This is Chitin synthase E from Aspergillus fumigatus (strain ATCC MYA-4609 / CBS 101355 / FGSC A1100 / Af293) (Neosartorya fumigata).